A 253-amino-acid chain; its full sequence is HTH-type transcriptional regulator AdiY (253 aa).

One can recognise an HTH araC/xylS-type domain in the interval 149–246; that stretch reads DSVYQIIESD…GMTPLHYVSQ (98 aa). 2 consecutive DNA-binding regions (H-T-H motif) follow at residues 166-187 and 213-236; these read SMVA…KSEN and ISQV…KDFY.

The polypeptide is HTH-type transcriptional regulator AdiY (adiY) (Escherichia coli (strain K12)).